The following is a 97-amino-acid chain: UPF0223 protein lp_2149 (97 aa).

This sequence belongs to the UPF0223 family.

In Lactiplantibacillus plantarum (strain ATCC BAA-793 / NCIMB 8826 / WCFS1) (Lactobacillus plantarum), this protein is UPF0223 protein lp_2149.